Here is a 95-residue protein sequence, read N- to C-terminus: Protein TusB (95 aa).

Belongs to the DsrH/TusB family. In terms of assembly, heterohexamer, formed by a dimer of trimers. The hexameric TusBCD complex contains 2 copies each of TusB, TusC and TusD. The TusBCD complex interacts with TusE.

The protein resides in the cytoplasm. Part of a sulfur-relay system required for 2-thiolation of 5-methylaminomethyl-2-thiouridine (mnm(5)s(2)U) at tRNA wobble positions. The polypeptide is Protein TusB (Klebsiella pneumoniae (strain 342)).